The following is a 376-amino-acid chain: Erythronate-4-phosphate dehydrogenase (376 aa).

Residues S45 and T67 each contribute to the substrate site. D147 is a binding site for NAD(+). R209 is a catalytic residue. D233 serves as a coordination point for NAD(+). The active site involves E238. H255 serves as the catalytic Proton donor. G258 is a binding site for NAD(+). Y259 provides a ligand contact to substrate.

This sequence belongs to the D-isomer specific 2-hydroxyacid dehydrogenase family. PdxB subfamily. As to quaternary structure, homodimer.

It is found in the cytoplasm. The enzyme catalyses 4-phospho-D-erythronate + NAD(+) = (R)-3-hydroxy-2-oxo-4-phosphooxybutanoate + NADH + H(+). Its pathway is cofactor biosynthesis; pyridoxine 5'-phosphate biosynthesis; pyridoxine 5'-phosphate from D-erythrose 4-phosphate: step 2/5. Functionally, catalyzes the oxidation of erythronate-4-phosphate to 3-hydroxy-2-oxo-4-phosphonooxybutanoate. In Shewanella baltica (strain OS185), this protein is Erythronate-4-phosphate dehydrogenase.